The following is a 415-amino-acid chain: Zona pellucida-like domain-containing protein 1 (415 aa).

The first 19 residues, 1–19 (MEQIWLLLLLTIRVLPGSA), serve as a signal peptide directing secretion. At 20–372 (QFNGYNCDAN…PPFQLNAITS (353 aa)) the chain is on the extracellular side. Positions 43 to 320 (YCGVQAITMK…PICSHRERRD (278 aa)) constitute a ZP domain. 2 disulfide bridges follow: Cys44–Cys155 and Cys79–Cys104. N-linked (GlcNAc...) asparagine glycans are attached at residues Asn121 and Asn164. 2 disulfide bridges follow: Cys235/Cys296 and Cys255/Cys313. Positions 323–360 (RRTTWSPQSSSGSAVLSAGPIITRSDETPTNNSQLGSP) are disordered. Polar residues-rich tracts occupy residues 325–336 (TTWSPQSSSGSA) and 350–359 (TPTNNSQLGS). The helical transmembrane segment at 373–393 (ALISGMVILGVTSFSLLLCSL) threads the bilayer. The Cytoplasmic portion of the chain corresponds to 394–415 (ALLHRKGPTSLVLNGIRNPVFD).

Post-translationally, proteolytically cleaved before the transmembrane segment to yield the secreted form found in the extracellular matrix of the cupula. In terms of tissue distribution, detected in placenta, kidney, lung, pancreas and at very low level in other tissues.

It localises to the cytoplasmic vesicle membrane. Its subcellular location is the secreted. It is found in the extracellular space. The protein resides in the extracellular matrix. Functionally, glycoprotein which is a component of the gelatinous extracellular matrix in the cupulae of the vestibular organ. This is Zona pellucida-like domain-containing protein 1 (ZPLD1) from Homo sapiens (Human).